The sequence spans 207 residues: ATP-dependent Clp protease proteolytic subunit (207 aa).

The active-site Nucleophile is Ser111. The active site involves His136.

It belongs to the peptidase S14 family. Fourteen ClpP subunits assemble into 2 heptameric rings which stack back to back to give a disk-like structure with a central cavity, resembling the structure of eukaryotic proteasomes.

Its subcellular location is the cytoplasm. It catalyses the reaction Hydrolysis of proteins to small peptides in the presence of ATP and magnesium. alpha-casein is the usual test substrate. In the absence of ATP, only oligopeptides shorter than five residues are hydrolyzed (such as succinyl-Leu-Tyr-|-NHMec, and Leu-Tyr-Leu-|-Tyr-Trp, in which cleavage of the -Tyr-|-Leu- and -Tyr-|-Trp bonds also occurs).. In terms of biological role, cleaves peptides in various proteins in a process that requires ATP hydrolysis. Has a chymotrypsin-like activity. Plays a major role in the degradation of misfolded proteins. The sequence is that of ATP-dependent Clp protease proteolytic subunit from Pectobacterium atrosepticum (strain SCRI 1043 / ATCC BAA-672) (Erwinia carotovora subsp. atroseptica).